A 209-amino-acid chain; its full sequence is Cytidylate kinase (209 aa).

9 to 17 serves as a coordination point for ATP; that stretch reads GPAAAGKGT.

It belongs to the cytidylate kinase family. Type 1 subfamily.

It is found in the cytoplasm. The enzyme catalyses CMP + ATP = CDP + ADP. It catalyses the reaction dCMP + ATP = dCDP + ADP. The polypeptide is Cytidylate kinase (Granulibacter bethesdensis (strain ATCC BAA-1260 / CGDNIH1)).